The following is a 236-amino-acid chain: Heme oxygenase (236 aa).

His17 lines the heme b pocket.

Belongs to the heme oxygenase family.

The protein localises to the plastid. It is found in the chloroplast. The catalysed reaction is heme b + 3 reduced [NADPH--hemoprotein reductase] + 3 O2 = biliverdin IXalpha + CO + Fe(2+) + 3 oxidized [NADPH--hemoprotein reductase] + 3 H2O + H(+). Catalyzes the opening of the heme ring with the release of iron. Key enzyme in the synthesis of the chromophoric part of the photosynthetic antennae. In Porphyra purpurea (Red seaweed), this protein is Heme oxygenase (pbsA).